Reading from the N-terminus, the 374-residue chain is Alcohol dehydrogenase class-3 (374 aa).

An N-acetylalanine modification is found at alanine 2. Positions 45, 67, 97, 100, 103, 111, and 174 each coordinate Zn(2+). The residue at position 233 (lysine 233) is an N6-succinyllysine. At serine 247 the chain carries Phosphoserine. At lysine 315 the chain carries N6-succinyllysine. Residues serine 324 and serine 351 each carry the phosphoserine modification.

It belongs to the zinc-containing alcohol dehydrogenase family. Class-III subfamily. In terms of assembly, homodimer. It depends on Zn(2+) as a cofactor.

The protein localises to the cytoplasm. The enzyme catalyses a primary alcohol + NAD(+) = an aldehyde + NADH + H(+). It catalyses the reaction a secondary alcohol + NAD(+) = a ketone + NADH + H(+). It carries out the reaction S-(hydroxymethyl)glutathione + NADP(+) = S-formylglutathione + NADPH + H(+). The catalysed reaction is S-(hydroxymethyl)glutathione + NAD(+) = S-formylglutathione + NADH + H(+). The enzyme catalyses 20-oxo-(5Z,8Z,11Z,14Z)-eicosatetraenoate + NAD(+) + H2O = (5Z,8Z,11Z,14Z)-eicosatetraenedioate + NADH + 2 H(+). It catalyses the reaction 20-hydroxy-(5Z,8Z,11Z,14Z)-eicosatetraenoate + NAD(+) = 20-oxo-(5Z,8Z,11Z,14Z)-eicosatetraenoate + NADH + H(+). It carries out the reaction S-nitrosoglutathione + NADH + H(+) = S-(hydroxysulfenamide)glutathione + NAD(+). Functionally, catalyzes the oxidation of long-chain primary alcohols and the oxidation of S-(hydroxymethyl) glutathione. Also oxidizes long chain omega-hydroxy fatty acids, such as 20-HETE, producing both the intermediate aldehyde, 20-oxoarachidonate and the end product, a dicarboxylic acid, (5Z,8Z,11Z,14Z)-eicosatetraenedioate. Class-III ADH is remarkably ineffective in oxidizing ethanol. Required for clearance of cellular formaldehyde, a cytotoxic and carcinogenic metabolite that induces DNA damage. Also acts as a S-nitroso-glutathione reductase by catalyzing the NADH-dependent reduction of S-nitrosoglutathione, thereby regulating protein S-nitrosylation. This is Alcohol dehydrogenase class-3 from Oryctolagus cuniculus (Rabbit).